Consider the following 409-residue polypeptide: Elongation factor Tu, chloroplastic (409 aa).

The tr-type G domain maps to 10–214; the sequence is KPHVNIGTIG…NVDSYIPTPA (205 aa). A G1 region spans residues 19–26; it reads GHVDHGKT. A GTP-binding site is contributed by 19 to 26; sequence GHVDHGKT. A Mg(2+)-binding site is contributed by Thr-26. The interval 60 to 64 is G2; sequence GITIN. The G3 stretch occupies residues 81–84; sequence DCPG. GTP-binding positions include 81 to 85 and 136 to 139; these read DCPGH and NKED. The interval 136–139 is G4; the sequence is NKED. The G5 stretch occupies residues 174-176; sequence SAL.

This sequence belongs to the TRAFAC class translation factor GTPase superfamily. Classic translation factor GTPase family. EF-Tu/EF-1A subfamily.

It localises to the plastid. It is found in the chloroplast. It catalyses the reaction GTP + H2O = GDP + phosphate + H(+). GTP hydrolase that promotes the GTP-dependent binding of aminoacyl-tRNA to the A-site of ribosomes during protein biosynthesis. In Ostreococcus tauri, this protein is Elongation factor Tu, chloroplastic (tufA).